We begin with the raw amino-acid sequence, 898 residues long: Chloride channel protein 2 (898 aa).

Ala2 bears the N-acetylalanine mark. At 2 to 87 (AAAAAEEGME…RCHKFLVSRV (86 aa)) the chain is on the cytoplasmic side. Residues 16–34 (QYEQTLMYGRYTQDLGAFA) form an essential for channel gating by both voltage and cell volume region. At Thr20 the chain carries Phosphothreonine. Residues 36-49 (EEAARIRLGGPEPW) form a modulates channel gating by both voltage and cell volume region. A run of 2 helical transmembrane segments spans residues 88-121 (GEDW…AQQW) and 130-155 (ILLQ…TQIL). A Selectivity filter part_1 motif is present at residues 161 to 165 (GSGIP). Ser162 serves as a coordination point for chloride. An intramembrane region (helical) is located at residues 164-171 (IPEMKTIL). The next 2 membrane-spanning stretches (helical) occupy residues 180-198 (LTLK…ALGS) and 205-223 (EGPF…SKFL). The short motif at 203 to 207 (GKEGP) is the Selectivity filter part_2 element. Intramembrane regions (helical) lie at residues 239–251 (MLAA…VGCC) and 255–263 (PIGGVLFSI). 5 helical membrane passes run 275-295 (YWRG…LAVW), 321-349 (LPAF…VQVM), 358-377 (FLMR…ISTL), 429-449 (ANVF…SALA), and 457-480 (GAFM…MAAW). A Selectivity filter part_3 motif is present at residues 457 to 461 (GAFMP). Phe459 lines the chloride pocket. Residues 497 to 511 (GGYAVVGAAALAGAV) constitute an intramembrane region (helical). An intramembrane region (note=Loop between two helices) is located at residues 512 to 513 (TH). An intramembrane region (helical) is located at residues 514-525 (TVSTAVIVFELT). The note=Loop between two helices intramembrane region spans 526–530 (GQIAH). A helical transmembrane segment spans residues 531 to 548 (ILPVMIAVILANAVAQSL). The Cytoplasmic segment spans residues 549–898 (QPSLYDSIIR…SPSDSDDKCQ (350 aa)). Tyr553 provides a ligand contact to chloride. Residues 584-642 (MVRDVPHVALSCTFRDLRLALHRTKGRMLALVESPESMILLGSIERSQVVALLGAQLSP) form the CBS 1 domain. Disordered stretches follow at residues 643 to 672 (ARRR…PEAS) and 686 to 717 (AARG…TGSA). Residues 705–717 (VTRNLGESPTGSA) are compositionally biased toward polar residues. Phosphoserine is present on residues Ser712 and Ser758. The CBS 2 domain maps to 790–850 (IDPAPFQLVE…GSVTAQGVKV (61 aa)). The short motif at 812-813 (LL) is the Basolateral membrane sorting element. The disordered stretch occupies residues 856 to 898 (SFRDSATSSSDTETTEVHALWGPHSRHGLPREGSPSDSDDKCQ).

This sequence belongs to the chloride channel (TC 2.A.49) family. ClC-2/CLCN2 subfamily. In terms of assembly, homodimer. Interacts with auxiliary subunit HEPACAM. Post-translationally, phosphorylated. Activated by dephosphorylation. Ubiquitously expressed. Moderately expressed in aortic and coronary vascular smooth muscle cells and expressed at a low level in aortic endothelial cells. Expressed in the adrenal gland, predominantly in the zona glomerulosa. Expressed in white mater perivascular astrocytes and ependymal cells (at protein level).

The protein resides in the cell membrane. The protein localises to the basolateral cell membrane. It is found in the cell projection. Its subcellular location is the dendritic spine membrane. It localises to the axon. It catalyses the reaction chloride(in) = chloride(out). The enzyme catalyses thiocyanate(in) = thiocyanate(out). The catalysed reaction is bromide(in) = bromide(out). It carries out the reaction nitrate(in) = nitrate(out). It catalyses the reaction iodide(out) = iodide(in). Common gate kinetics are down-regulated by intracellular ATP. Inhibited by AK-42, a derivative of meclofenamate. Inhibited by Cd(2+). Inhibited by Zn(2+) and PKC activation. Inhibited at acidic pH. CCLN2:HEPACAM channel conductance is up-regulated upon hypo-osmolarity. Its function is as follows. Voltage-gated and osmosensitive chloride channel. Forms a homodimeric channel where each subunit has its own ion conduction pathway. Conducts double-barreled currents controlled by two types of gates, two fast glutamate gates that control each subunit independently and a slow common gate that opens and shuts off both subunits simultaneously. Displays inward rectification currents activated upon membrane hyperpolarization and extracellular hypotonicity. Contributes to chloride conductance involved in neuron excitability. In hippocampal neurons, generates a significant part of resting membrane conductance and provides an additional chloride efflux pathway to prevent chloride accumulation in dendrites upon GABA receptor activation. In glia, associates with the auxiliary subunit HEPACAM/GlialCAM at astrocytic processes and myelinated fiber tracts where it may regulate transcellular chloride flux buffering extracellular chloride and potassium concentrations. Regulates aldosterone production in adrenal glands. The opening of CLCN2 channels at hyperpolarized membrane potentials in the glomerulosa causes cell membrane depolarization, activation of voltage-gated calcium channels and increased expression of aldosterone synthase, the rate-limiting enzyme for aldosterone biosynthesis. Contributes to chloride conductance in retinal pigment epithelium involved in phagocytosis of shed photoreceptor outer segments and photoreceptor renewal. Conducts chloride currents at the basolateral membrane of epithelial cells with a role in chloride reabsorption rather than secretion. Permeable to small monovalent anions with chloride &gt; thiocyanate &gt; bromide &gt; nitrate &gt; iodide ion selectivity. The polypeptide is Chloride channel protein 2 (Homo sapiens (Human)).